A 252-amino-acid polypeptide reads, in one-letter code: tRNA (guanine-N(1)-)-methyltransferase (252 aa).

S-adenosyl-L-methionine is bound by residues glycine 113 and isoleucine 133–leucine 138.

It belongs to the RNA methyltransferase TrmD family. As to quaternary structure, homodimer.

Its subcellular location is the cytoplasm. It catalyses the reaction guanosine(37) in tRNA + S-adenosyl-L-methionine = N(1)-methylguanosine(37) in tRNA + S-adenosyl-L-homocysteine + H(+). Its function is as follows. Specifically methylates guanosine-37 in various tRNAs. The protein is tRNA (guanine-N(1)-)-methyltransferase of Xanthomonas campestris pv. campestris (strain B100).